Consider the following 88-residue polypeptide: Putative membrane protein insertion efficiency factor (88 aa).

The segment at valine 68–histidine 88 is disordered. Residues proline 69–cysteine 82 are compositionally biased toward basic and acidic residues.

The protein belongs to the UPF0161 family.

It is found in the cell membrane. Could be involved in insertion of integral membrane proteins into the membrane. This Listeria monocytogenes serovar 1/2a (strain ATCC BAA-679 / EGD-e) protein is Putative membrane protein insertion efficiency factor.